A 353-amino-acid chain; its full sequence is BLOC-1-related complex subunit 6 (353 aa).

Positions 23-194 (AIFGDGPGQT…SGAGGGRRAT (172 aa)) are disordered. A compositionally biased stretch (basic and acidic residues) spans 102–126 (FDLHGSSRRKDPEPPEAKPESERVC). Phosphoserine is present on residues Ser-130 and Ser-166. The span at 172–191 (GACGGPASSGGAESGAGGGR) shows a compositional bias: gly residues. Thr-194 is modified (phosphothreonine). Ser-197 carries the post-translational modification Phosphoserine. Residues 225-253 (LSGAPQPPPPAPTRPCSAPTPTPAIPPID) form a disordered region. The segment covering 229–253 (PQPPPPAPTRPCSAPTPTPAIPPID) has biased composition (pro residues).

This sequence belongs to the BORCS6 family. In terms of assembly, component of the BLOC-one-related complex (BORC) which is composed of BLOC1S1, BLOC1S2, BORCS5, BORCS6, BORCS7, BORCS8, KXD1 and SNAPIN.

It localises to the lysosome membrane. Functionally, as part of the BORC complex may play a role in lysosomes movement and localization at the cell periphery. Associated with the cytosolic face of lysosomes, the BORC complex may recruit ARL8B and couple lysosomes to microtubule plus-end-directed kinesin motor. The polypeptide is BLOC-1-related complex subunit 6 (Bos taurus (Bovine)).